We begin with the raw amino-acid sequence, 198 residues long: RNA-free ribonuclease P (198 aa).

The protein belongs to the HARP family.

It carries out the reaction Endonucleolytic cleavage of RNA, removing 5'-extranucleotides from tRNA precursor.. Its function is as follows. RNA-free RNase P that catalyzes the removal of the 5'-leader sequence from pre-tRNA to produce the mature 5'-terminus. In Thermococcus kodakarensis (strain ATCC BAA-918 / JCM 12380 / KOD1) (Pyrococcus kodakaraensis (strain KOD1)), this protein is RNA-free ribonuclease P.